A 139-amino-acid chain; its full sequence is NADH-quinone oxidoreductase subunit A (139 aa).

A run of 3 helical transmembrane segments spans residues 16-36 (GLFI…ASLL), 69-89 (LVAM…AWAV), and 94-114 (VGWE…AGLV).

This sequence belongs to the complex I subunit 3 family. In terms of assembly, NDH-1 is composed of 14 different subunits. Subunits NuoA, H, J, K, L, M, N constitute the membrane sector of the complex.

The protein localises to the cell inner membrane. It catalyses the reaction a quinone + NADH + 5 H(+)(in) = a quinol + NAD(+) + 4 H(+)(out). In terms of biological role, NDH-1 shuttles electrons from NADH, via FMN and iron-sulfur (Fe-S) centers, to quinones in the respiratory chain. The immediate electron acceptor for the enzyme in this species is believed to be ubiquinone. Couples the redox reaction to proton translocation (for every two electrons transferred, four hydrogen ions are translocated across the cytoplasmic membrane), and thus conserves the redox energy in a proton gradient. The chain is NADH-quinone oxidoreductase subunit A from Chromohalobacter salexigens (strain ATCC BAA-138 / DSM 3043 / CIP 106854 / NCIMB 13768 / 1H11).